A 312-amino-acid chain; its full sequence is Elongation factor Ts (312 aa).

The tract at residues 84-87 (TDFL) is involved in Mg(2+) ion dislocation from EF-Tu.

Belongs to the EF-Ts family.

The protein resides in the cytoplasm. Associates with the EF-Tu.GDP complex and induces the exchange of GDP to GTP. It remains bound to the aminoacyl-tRNA.EF-Tu.GTP complex up to the GTP hydrolysis stage on the ribosome. The protein is Elongation factor Ts of Caulobacter sp. (strain K31).